A 471-amino-acid chain; its full sequence is Proline--tRNA ligase 2 (471 aa).

This sequence belongs to the class-II aminoacyl-tRNA synthetase family. ProS type 3 subfamily. As to quaternary structure, homodimer.

Its subcellular location is the cytoplasm. The enzyme catalyses tRNA(Pro) + L-proline + ATP = L-prolyl-tRNA(Pro) + AMP + diphosphate. Catalyzes the attachment of proline to tRNA(Pro) in a two-step reaction: proline is first activated by ATP to form Pro-AMP and then transferred to the acceptor end of tRNA(Pro). In Streptomyces avermitilis (strain ATCC 31267 / DSM 46492 / JCM 5070 / NBRC 14893 / NCIMB 12804 / NRRL 8165 / MA-4680), this protein is Proline--tRNA ligase 2.